The chain runs to 892 residues: Translation initiation factor IF-2 (892 aa).

Residues 88–305 (KKRTFVKRDP…SLQQGFQKPA (218 aa)) are disordered. Composition is skewed to basic and acidic residues over residues 93–159 (VKRD…KDKV) and 166–216 (DMTK…EENK). Residues 254-269 (GRGRNAKAARPAKKGK) are compositionally biased toward basic residues. Residues 270–282 (HAESKADREEARA) are compositionally biased toward basic and acidic residues. In terms of domain architecture, tr-type G spans 391 to 560 (PRAPVVTIMG…LLQAEVLELK (170 aa)). Residues 400–407 (GHVDHGKT) are G1. Residue 400–407 (GHVDHGKT) participates in GTP binding. The tract at residues 425–429 (GITQH) is G2. The interval 446 to 449 (DTPG) is G3. GTP-binding positions include 446–450 (DTPGH) and 500–503 (NKID). Positions 500–503 (NKID) are G4. Residues 536–538 (SAK) are G5.

The protein belongs to the TRAFAC class translation factor GTPase superfamily. Classic translation factor GTPase family. IF-2 subfamily.

The protein resides in the cytoplasm. In terms of biological role, one of the essential components for the initiation of protein synthesis. Protects formylmethionyl-tRNA from spontaneous hydrolysis and promotes its binding to the 30S ribosomal subunits. Also involved in the hydrolysis of GTP during the formation of the 70S ribosomal complex. The sequence is that of Translation initiation factor IF-2 from Salmonella paratyphi A (strain ATCC 9150 / SARB42).